Reading from the N-terminus, the 115-residue chain is LSM complex subunit LSM7 (115 aa).

Over residues 1 to 10 the composition is skewed to basic and acidic residues; it reads MHQQHSKSEN. Residues 1–23 are disordered; it reads MHQQHSKSENKPQQQRKKFEGPK. Positions 25-108 constitute a Sm domain; it reads EAILDLAKYK…LVSLSSAEGS (84 aa).

Belongs to the snRNP Sm proteins family. In terms of assembly, component of the heptameric LSM1-LSM7 complex that forms a seven-membered ring structure with a donut shape. The LSm subunits are arranged in the order LSM1, LSM2, LSM3, LSM6, LSM5, LSM7 and LSM4. Except for LSM1, where a C-terminal helix crosses the ring structure to form additional interactions with LSM3 and LSM6, each subunit interacts only with its two neighboring subunits. The LSM1-LSM7 complex interacts with PAT1; within the complex PAT1 has direct interactions with LSM2 and LSM3. The LSM1-LSM7 complex interacts with XRN1. Component of the heptameric LSM2-LSM8 complex that forms a seven-membered ring structure with a donut shape; an RNA strand can pass through the hole in the center of the ring structure. The LSm subunits are arranged in the order LSM8, LSM2, LSM3, LSM6, LSM5, LSM7 and LSM4. Component of the spliceosome U4/U6-U5 tri-snRNP complex composed of the U4, U6 and U5 snRNAs and at least PRP3, PRP4, PRP6, PRP8, PRP18, PRP31, PRP38, SNU13, SNU23, SNU66, SNU114, SPP381, SMB1, SMD1, SMD2, SMD3, SMX2, SMX3, LSM2, LSM3, LSM4, LSM5, LSM6, LSM7, LSM8, BRR2 and DIB1. May be found in a complex comprising LSM2-LSM7 without LSM1 or LSM8; the complex associates with pre-P RNA and snoRNA SNR5.

Its subcellular location is the nucleus. It is found in the nucleolus. The protein resides in the cytoplasm. Functionally, component of LSm protein complexes, which are involved in RNA processing and may function in a chaperone-like manner. Component of the cytoplasmic LSM1-LSM7 complex which is involved in mRNA degradation by activating the decapping step. Together with PAT1, the LSM1-LSM7 complex binds to osmotic stress-activated mRNAs to attenuate the osmotic stress response, probably by limiting ribosome access to the mRNA and consequently translation. Component of the nuclear LSM2-LSM8 complex, which is involved in spliceosome assembly. The LSM2-LSM8 complex plays a role in the biogenesis of the spliceosomal U4/U6-U5 tri-snRNP complex by accelerating PRP24-mediated annealing of U4/U6 di-snRNA. The LSM2-LSM8 complex binds U6 snRNA terminating with a non-cyclic 3' phosphate group. LSM2-LSM8 is probably also involved in degradation of nuclear pre-mRNA by targeting them for decapping. LSM2-LSM8 could be involved in processing of pre-tRNAs, pre-rRNAs and U3 snoRNA, although involvement may be indirect. In a complex that probably contains LSM2-LSM7, but not LSM1 or LSM8, associates with the precursor of the RNA component of RNase P (pre-P RNA) and may be involved in maturing pre-P RNA; the complex also associates with snoRNA SNR5. The polypeptide is LSM complex subunit LSM7 (LSM7) (Saccharomyces cerevisiae (strain ATCC 204508 / S288c) (Baker's yeast)).